Here is a 243-residue protein sequence, read N- to C-terminus: MALYTIGEVALLCDINPVTLRAWQRRYGLLKPQRTDGGHRLFNDADIDRIREIKRWIDNGVQVSKVKMLLSNENVDVQNGWRDQQETLLTYLQSGNLHSLRTWIKERGQDYPAQTLTTHLFIPLRRRLQCQQPTLQALLAILDGVLINYIAICLASARKKQGKDALVVGWNIQDTTRLWLEGWIASQQGWRIDVLAHSLNQLRPELFEGRTLLVWCGENRTSAQQQQLTSWQEQGHDIFPLGI.

The HTH merR-type domain maps to 3 to 72; sequence LYTIGEVALL…VSKVKMLLSN (70 aa). The segment at residues 6–25 is a DNA-binding region (H-T-H motif); that stretch reads IGEVALLCDINPVTLRAWQR.

As to quaternary structure, interacts with DgcM and PdeR.

Activity is regulated by DgcM and PdeR. Functionally, activates transcription of csgD, the master regulator of biofilm formation, by binding to its promoter region. Also controls the transcription of cadC and ibaG. Part of a signaling cascade that regulates curli biosynthesis. The cascade is composed of two c-di-GMP control modules, in which c-di-GMP controlled by the DgcE/PdeH pair (module I) regulates the activity of the DgcM/PdeR pair (module II), which in turn regulates activity of the transcription factor MlrA. The chain is HTH-type transcriptional regulator MlrA from Escherichia coli (strain K12).